Reading from the N-terminus, the 111-residue chain is Large ribosomal subunit protein P1 (111 aa).

The tract at residues 75–111 is disordered; that stretch reads AAAPAAEEKAEEEKKEEEEEKKEEEVDLSGLSGMFGF. Residues 88-101 show a composition bias toward acidic residues; it reads KKEEEEEKKEEEVD.

It belongs to the eukaryotic ribosomal protein P1/P2 family. Part of the 50S ribosomal subunit. Homodimer, it forms part of the ribosomal stalk which helps the ribosome interact with GTP-bound translation factors. Forms a heptameric uL10/P0(P1)2(P1)2(P1)2 complex, where uL10/P0 forms an elongated spine to which the P1 dimers bind in a sequential fashion.

In terms of biological role, forms part of the ribosomal stalk, playing a central role in the interaction of the ribosome with GTP-bound translation factors. The protein is Large ribosomal subunit protein P1 of Aeropyrum pernix (strain ATCC 700893 / DSM 11879 / JCM 9820 / NBRC 100138 / K1).